Here is a 525-residue protein sequence, read N- to C-terminus: Serine/threonine protein phosphatase 2A 55 kDa regulatory subunit B beta isoform (525 aa).

Residues 1-31 form a disordered region; sequence MDPFSKSPDDDDLRPEAEAARRPQPQPQPRE. 2 WD repeats span residues 48–87 and 124–165; these read QEVD…DSAS and EIEE…VKRI. The tract at residues 169 to 191 is disordered; the sequence is NLNTSQSSGNGTTSSSSSSSSRA. Low complexity predominate over residues 171-189; that stretch reads NTSQSSGNGTTSSSSSSSS. WD repeat units lie at residues 244–282, 293–333, 352–390, and 495–525; these read AHDY…QSFN, DLTE…LCDN, EIIA…GPVA, and DLST…MYYA.

It belongs to the phosphatase 2A regulatory subunit B family. As to quaternary structure, PP2A consists of a common heteromeric enzyme, composed of a catalytic subunit (subunits C), a constant regulatory subunit (subunit A), and a variety of regulatory subunits such as subunits B (the R2/B/PR55/B55, R3/B''/PR72/PR130/PR59 and R5/B'/B56 families).

In terms of biological role, the B regulatory subunit may modulate substrate selectivity and catalytic activity, and may also direct the localization of the catalytic enzyme to a particular subcellular compartment. This is Serine/threonine protein phosphatase 2A 55 kDa regulatory subunit B beta isoform from Oryza sativa subsp. indica (Rice).